The primary structure comprises 153 residues: uncharacterized protein (153 aa).

The first 21 residues, 1-21 (MKITITSLLFFLVMIVELASA), serve as a signal peptide directing secretion.

This is an uncharacterized protein from Saccharomyces cerevisiae (strain ATCC 204508 / S288c) (Baker's yeast).